The following is a 119-amino-acid chain: Gibberellin-regulated protein 9 (119 aa).

The signal sequence occupies residues 1–24; sequence MKKMNVVAFVTLIISFLLLSQVLA.

It belongs to the GASA family. Six disulfide bonds may be present.

It is found in the secreted. Its function is as follows. Gibberellin-regulated protein that may function in hormonal controlled steps of development such as seed germination, flowering and seed maturation. This is Gibberellin-regulated protein 9 (GASA9) from Arabidopsis thaliana (Mouse-ear cress).